Consider the following 590-residue polypeptide: Sperm-associated microtubule inner protein 4 (590 aa).

Thr219 is subject to Phosphothreonine. Ser407 and Ser422 each carry phosphoserine. Lys427 is covalently cross-linked (Glycyl lysine isopeptide (Lys-Gly) (interchain with G-Cter in SUMO2)). At Tyr442 the chain carries Phosphotyrosine. A Phosphoserine modification is found at Ser485. Lys545 is covalently cross-linked (Glycyl lysine isopeptide (Lys-Gly) (interchain with G-Cter in SUMO2)). Ser547 carries the post-translational modification Phosphoserine.

Predominantly expressed in the testes.

It localises to the cytoplasm. The protein resides in the cytoskeleton. The protein localises to the microtubule organizing center. It is found in the centrosome. Its subcellular location is the flagellum axoneme. In terms of biological role, microtubule inner protein (MIP) part of the dynein-decorated doublet microtubules (DMTs) in flagellum axoneme. May serve to reinforce and thus stabilize the microtubule structure in the sperm flagella. This chain is Sperm-associated microtubule inner protein 4, found in Homo sapiens (Human).